We begin with the raw amino-acid sequence, 88 residues long: Large ribosomal subunit protein bL27 (88 aa).

The tract at residues 1 to 21 (MAHKKGQGSTQNNRDSAGRRL) is disordered.

Belongs to the bacterial ribosomal protein bL27 family.

This is Large ribosomal subunit protein bL27 from Helicobacter pylori (strain P12).